Consider the following 551-residue polypeptide: Protein PLASTID TRANSCRIPTIONALLY ACTIVE 12, chloroplastic (551 aa).

The N-terminal 47 residues, 1-47 (MASCSRTWLLPGMAPQATAQTVPRPLQSLKVFAGLPHRRRVLFSGVS), are a transit peptide targeting the chloroplast. Disordered regions lie at residues 76-161 (SSYF…EGES) and 463-529 (HSYN…DQLS). Residues 109 to 119 (RVRAARAPAPV) are compositionally biased toward low complexity. Composition is skewed to acidic residues over residues 467–476 (EDSDDDEEDA) and 485–498 (SLEDDEDDGDDAED). Positions 505-516 (RNWSVLKTTGQA) are enriched in polar residues. Residues 518-529 (NPKEKSKKDQLS) are compositionally biased toward basic and acidic residues.

In terms of assembly, component of the plastid-encoded plastid RNA polymerase (PEP) complex.

Its subcellular location is the plastid. It localises to the chloroplast. Functionally, required for the activity of the plastid-encoded RNA polymerase (PEP) and full expression of genes transcribed by PEP. Required for the proper build-up and formation of the PEP-complex. Binds single-stranded (ss) DNA and RNA, but not double-stranded (ds) DNA. The sequence is that of Protein PLASTID TRANSCRIPTIONALLY ACTIVE 12, chloroplastic from Oryza sativa subsp. japonica (Rice).